Here is a 485-residue protein sequence, read N- to C-terminus: Tektin-5 (485 aa).

Coiled coils occupy residues 113–185 (SRLT…EVNC), 225–251 (QQQM…ALER), 342–385 (FNAR…MAKE), and 423–443 (DDTL…LQLL).

It belongs to the tektin family. As to quaternary structure, microtubule inner protein component of sperm flagellar doublet microtubules. Interacts with TEKT3. Post-translationally, ubiquitinated, leading to its degradation. Deubiquitinated by USP16, promoting its stability.

It is found in the cytoplasm. Its subcellular location is the cytoskeleton. The protein resides in the flagellum axoneme. Functionally, sperm-specific microtubule inner protein (MIP) part of the dynein-decorated doublet microtubules (DMTs) in flagellar axoneme. Forms an extensive interaction network in different conformations that reinforces the helix bundle composed by other tektin proteins (TEKT1 to TEKT4) and MIPs to anchor the tektin bundle onto the tubulin wall of A-tubule of the sperm flagellum. The chain is Tektin-5 (TEKT5) from Macaca fascicularis (Crab-eating macaque).